The following is a 1061-amino-acid chain: Zinc finger protein ZFPM1 (1061 aa).

The CCHC FOG-type 1 zinc-finger motif lies at Val152 to Gln185. Zn(2+) contacts are provided by Cys160, Cys163, His176, and Cys181. C2H2-type zinc fingers lie at residues Arg204–His228, Phe234–His256, and Gly262–His285. 2 disordered regions span residues Pro349–Thr393 and Thr435–Thr455. Low complexity predominate over residues Ser378–Ser388. A compositionally biased stretch (polar residues) spans Glu436–Pro448. Residues Ser508 to His541 form a CCHC FOG-type 2 zinc finger. Positions 516, 519, 532, and 537 each coordinate Zn(2+). Disordered regions lie at residues Ala561–Ala586 and Met599–Val630. Over residues Gly565–Ser574 the composition is skewed to polar residues. The segment at Glu623–His656 adopts a CCHC FOG-type 3 zinc-finger fold. 4 residues coordinate Zn(2+): Cys631, Cys634, His647, and Cys652. The tract at residues Arg661–Arg681 is disordered. Residues Pro736–Lys742 are interaction with CTBP. A CCHC FOG-type 4 zinc finger spans residues Ala759–Pro792. Zn(2+)-binding residues include Cys767, Cys770, His783, and Cys788. A C2H2-type 4 zinc finger spans residues Thr869–His892. Residues Arg917–Ser1021 form a disordered region. 2 stretches are compositionally biased toward low complexity: residues Val933–Pro942 and Thr954–Arg972. The span at Pro973–Asn984 shows a compositional bias: pro residues. A CCHC FOG-type 5 zinc finger spans residues Val1023–Ala1056. Residues Cys1031, Cys1034, His1047, and Cys1052 each coordinate Zn(2+).

The protein belongs to the FOG (Friend of GATA) family. Interacts with corepressor CTBP. Interacts with the N-terminal zinc-finger of GATA1 and probably GATA2. In terms of tissue distribution, predominantly expressed in heart and brain. Also expressed in ventral blood island and adult spleen.

The protein resides in the nucleus. Functionally, transcription regulator that plays an central role in red blood cell differentiation. Essential cofactor that acts via the formation of a heterodimer with transcription factors of the GATA family GATA1 and GATA2. Such heterodimer can both activate or repress transcriptional activity, depending on the cell and promoter context. Acts as a repressor of red blood cells, probably by modulating activity of GATA1. This is Zinc finger protein ZFPM1 (zfpm1) from Xenopus laevis (African clawed frog).